A 200-amino-acid chain; its full sequence is Superoxide dismutase [Mn] 2 (200 aa).

Mn(2+)-binding residues include H28, H76, D158, and H162.

It belongs to the iron/manganese superoxide dismutase family. It depends on Mn(2+) as a cofactor.

The catalysed reaction is 2 superoxide + 2 H(+) = H2O2 + O2. Its function is as follows. Destroys superoxide anion radicals which are normally produced within the cells and which are toxic to biological systems. The sequence is that of Superoxide dismutase [Mn] 2 (sod2) from Halobacterium salinarum (strain ATCC 700922 / JCM 11081 / NRC-1) (Halobacterium halobium).